Reading from the N-terminus, the 545-residue chain is Chaperonin GroEL 1 (545 aa).

ATP is bound by residues 30-33, K51, 87-91, G415, and D496; these read TLGP and DGTTT.

Belongs to the chaperonin (HSP60) family. Forms a cylinder of 14 subunits composed of two heptameric rings stacked back-to-back. Interacts with the co-chaperonin GroES.

It is found in the cytoplasm. It catalyses the reaction ATP + H2O + a folded polypeptide = ADP + phosphate + an unfolded polypeptide.. Its function is as follows. Together with its co-chaperonin GroES, plays an essential role in assisting protein folding. The GroEL-GroES system forms a nano-cage that allows encapsulation of the non-native substrate proteins and provides a physical environment optimized to promote and accelerate protein folding. This is Chaperonin GroEL 1 from Nitrobacter hamburgensis (strain DSM 10229 / NCIMB 13809 / X14).